The following is a 238-amino-acid chain: Ribonuclease PH (238 aa).

Phosphate-binding positions include arginine 86 and 124–126; that span reads GTR.

The protein belongs to the RNase PH family. Homohexameric ring arranged as a trimer of dimers.

It carries out the reaction tRNA(n+1) + phosphate = tRNA(n) + a ribonucleoside 5'-diphosphate. Its function is as follows. Phosphorolytic 3'-5' exoribonuclease that plays an important role in tRNA 3'-end maturation. Removes nucleotide residues following the 3'-CCA terminus of tRNAs; can also add nucleotides to the ends of RNA molecules by using nucleoside diphosphates as substrates, but this may not be physiologically important. Probably plays a role in initiation of 16S rRNA degradation (leading to ribosome degradation) during starvation. In Actinobacillus pleuropneumoniae serotype 5b (strain L20), this protein is Ribonuclease PH.